We begin with the raw amino-acid sequence, 280 residues long: Probable endonuclease 4 (280 aa).

Histidine 69, histidine 109, glutamate 145, aspartate 179, histidine 182, histidine 216, aspartate 229, histidine 231, and glutamate 261 together coordinate Zn(2+).

This sequence belongs to the AP endonuclease 2 family. It depends on Zn(2+) as a cofactor.

It carries out the reaction Endonucleolytic cleavage to 5'-phosphooligonucleotide end-products.. Endonuclease IV plays a role in DNA repair. It cleaves phosphodiester bonds at apurinic or apyrimidinic (AP) sites, generating a 3'-hydroxyl group and a 5'-terminal sugar phosphate. The protein is Probable endonuclease 4 of Photorhabdus laumondii subsp. laumondii (strain DSM 15139 / CIP 105565 / TT01) (Photorhabdus luminescens subsp. laumondii).